A 425-amino-acid polypeptide reads, in one-letter code: O-methyltransferase AMT9 (425 aa).

S-adenosyl-L-methionine-binding positions include G257–G258, D280, D306–F307, R322, and R323. Catalysis depends on H326, which acts as the Proton acceptor.

Belongs to the class I-like SAM-binding methyltransferase superfamily. Cation-independent O-methyltransferase family.

Its pathway is mycotoxin biosynthesis. Functionally, O-methyltransferase; part of the gene clusters that mediate the biosynthesis of AM-toxins, host-selective toxins (HSTs) causing Alternaria blotch on apple, a worldwide distributed disease. AM-toxins are cyclic depsipeptides containing the 3 residues 2-hydroxy-isovaleric acid (2-HIV), dehydroalanine, L-alanine which are common for all 3 AM-toxins I to III. The fourth precursor is L-alpha-amino-methoxyphenyl-valeric acid (L-Amv) for AM-toxin I, L-alpha-amino-phenyl-valeric acid (L-Apv) for AM-toxin II, and L-alpha-amino-hydroxyphenyl-valeric acid (L-Ahv) for AM-toxin III. AM-toxins have two target sites for affecting susceptible apple cells; they cause invagination of the plasma membrane and electrolyte loss and chloroplast disorganization. The non-ribosomal peptide synthetase AMT1 contains 4 catalytic modules and is responsible for activation of each residue in AM-toxin. The aldo-keto reductase AMT2 catalyzes the conversion of 2-keto-isovaleric acid (2-KIV) to 2-hydroxy-isovaleric acid (2-HIV), one of the precursor residues incorporated by AMT1 during AM-toxin biosynthesis, by reduction of its ketone to an alcohol. The cytochrome P450 monooxygenase AMT3 and the thioesterase AMT4 are also important for AM-toxin production, but their exact function within the AM-toxin biosynthesis are not known yet. Up to 21 proteins (including AMT1 to AMT4) are predicted to be involved in AM-toxin biosynthesis since their expression ishighly up-regulated in AM-toxin-producing cultures. This chain is O-methyltransferase AMT9, found in Alternaria alternata (Alternaria rot fungus).